Here is a 461-residue protein sequence, read N- to C-terminus: Cysteine--tRNA ligase (461 aa).

Zn(2+) is bound at residue C30. The short motif at 32–42 (VTVYDLCHIGH) is the 'HIGH' region element. Zn(2+)-binding residues include C211, H236, and E240. The 'KMSKS' region motif lies at 268-272 (KMSKS). Residue K271 coordinates ATP.

It belongs to the class-I aminoacyl-tRNA synthetase family. As to quaternary structure, monomer. Zn(2+) serves as cofactor.

Its subcellular location is the cytoplasm. The catalysed reaction is tRNA(Cys) + L-cysteine + ATP = L-cysteinyl-tRNA(Cys) + AMP + diphosphate. In Shewanella sp. (strain MR-7), this protein is Cysteine--tRNA ligase.